The following is a 190-amino-acid chain: Elongation factor P (190 aa).

The protein belongs to the elongation factor P family.

It localises to the cytoplasm. Its pathway is protein biosynthesis; polypeptide chain elongation. Functionally, involved in peptide bond synthesis. Stimulates efficient translation and peptide-bond synthesis on native or reconstituted 70S ribosomes in vitro. Probably functions indirectly by altering the affinity of the ribosome for aminoacyl-tRNA, thus increasing their reactivity as acceptors for peptidyl transferase. This is Elongation factor P from Sulfurihydrogenibium sp. (strain YO3AOP1).